The sequence spans 196 residues: ATP-dependent Clp protease proteolytic subunit (196 aa).

The Nucleophile role is filled by serine 96. Histidine 121 is an active-site residue.

It belongs to the peptidase S14 family. In terms of assembly, fourteen ClpP subunits assemble into 2 heptameric rings which stack back to back to give a disk-like structure with a central cavity, resembling the structure of eukaryotic proteasomes.

The protein localises to the cytoplasm. The catalysed reaction is Hydrolysis of proteins to small peptides in the presence of ATP and magnesium. alpha-casein is the usual test substrate. In the absence of ATP, only oligopeptides shorter than five residues are hydrolyzed (such as succinyl-Leu-Tyr-|-NHMec, and Leu-Tyr-Leu-|-Tyr-Trp, in which cleavage of the -Tyr-|-Leu- and -Tyr-|-Trp bonds also occurs).. Functionally, cleaves peptides in various proteins in a process that requires ATP hydrolysis. Has a chymotrypsin-like activity. Plays a major role in the degradation of misfolded proteins. The sequence is that of ATP-dependent Clp protease proteolytic subunit from Streptococcus thermophilus (strain CNRZ 1066).